A 532-amino-acid polypeptide reads, in one-letter code: Cytochrome c oxidase subunit 1 (532 aa).

A run of 3 helical transmembrane segments spans residues 1 to 21 (MWDY…AYAA), 27 to 47 (LPYM…LIWV), and 69 to 89 (GVIA…VIAF). Heme b is bound at residue His114. The next 8 membrane-spanning stretches (helical) occupy residues 115 to 135 (TSAV…FYVV), 143 to 163 (LFGG…IIVT), 185 to 205 (LDIL…GTIF), 212 to 232 (IYVA…LHIV), 263 to 283 (GHNA…YYFV), 296 to 316 (LSIV…PHHL), 328 to 348 (LGMV…INGL), and 366 to 386 (MMVV…MMSI). The Cu cation site is built by His264, His314, and His315. The heme b site is built by His402 and His404. 3 helical membrane passes run 403-423 (VHSG…YFLT), 442-462 (FWLA…TGIM), and 496-516 (VGGV…WATV).

The protein belongs to the heme-copper respiratory oxidase family. Cu(2+) is required as a cofactor. Requires heme b as cofactor.

It is found in the cell membrane. It catalyses the reaction 4 Fe(II)-[cytochrome c] + O2 + 8 H(+)(in) = 4 Fe(III)-[cytochrome c] + 2 H2O + 4 H(+)(out). The protein operates within energy metabolism; oxidative phosphorylation. Functionally, cytochrome c oxidase is the component of the respiratory chain that catalyzes the reduction of oxygen to water. Subunits 1-3 form the functional core of the enzyme complex. Co I is the catalytic subunit of the enzyme. Electrons originating in cytochrome c are transferred via the copper A center of subunit 2 and heme a of subunit 1 to the bimetallic center formed by heme a3 and copper B. This cytochrome c oxidase shows proton pump activity across the membrane in addition to the electron transfer. The polypeptide is Cytochrome c oxidase subunit 1 (ctaD) (Rhodobacter capsulatus (Rhodopseudomonas capsulata)).